Here is a 565-residue protein sequence, read N- to C-terminus: uncharacterized protein (565 aa).

A signal peptide spans 1-19 (MRWLATFVALLIAISSVSA). Positions 494–504 (TGAENVTNNSV) are enriched in polar residues. Residues 494–525 (TGAENVTNNSVTATTPPAKASQQTPAPATPPV) are disordered. Low complexity predominate over residues 505–519 (TATTPPAKASQQTPA).

This is an uncharacterized protein from Archaeoglobus fulgidus (strain ATCC 49558 / DSM 4304 / JCM 9628 / NBRC 100126 / VC-16).